The following is a 1216-amino-acid chain: SPOC domain-containing protein 1 (1216 aa).

Disordered stretches follow at residues 1 to 74 (MSQA…RAAG), 166 to 216 (EARD…GAHS), 236 to 325 (NLLS…PPQS), 348 to 462 (RTGS…PRLE), and 511 to 601 (SSPS…QQEK). Over residues 36–50 (PGLSPDGPGASSGPG) the composition is skewed to low complexity. Over residues 177 to 190 (CDRRSPTLSKEEPP) the composition is skewed to basic and acidic residues. The segment covering 204 to 213 (RVRKKWRRQG) has biased composition (basic residues). The span at 266 to 278 (SGPGEPGGSGAGC) shows a compositional bias: gly residues. A compositionally biased stretch (low complexity) spans 314–325 (SLSSAAQAPPQS). A compositionally biased stretch (basic and acidic residues) spans 436-452 (RGTDRSSDNSHQDRPEE). The segment covering 581–592 (EAEEDSLPEQPE) has biased composition (acidic residues). The 121-residue stretch at 608–728 (VRGTVVRSMQ…IIEQQQKEPC (121 aa)) folds into the TFIIS central domain. Residues 823 to 850 (QTPMPAPEMPKTRELSPTEPQDRVPPSG) are disordered. Residues 832-844 (PKTRELSPTEPQD) are compositionally biased toward basic and acidic residues. An SPOC domain is found at 867 to 970 (WEGVLDMFSI…VEHMGMVLLP (104 aa)). The span at 1046–1055 (RYYQPDDRRP) shows a compositional bias: basic and acidic residues. Disordered regions lie at residues 1046-1140 (RYYQ…QHFH) and 1176-1216 (PRPL…PRKA).

In terms of assembly, interacts with DNMT3A, DNMT3C and DNMT3L. Interacts with C19orf84. Interacts with SPIN1; promoting recruitment to transposons marked with histone H3 trimethylated at both 'Lys-4' and 'Lys-9' (H3K4me3K9me3).

Its subcellular location is the nucleus. It is found in the chromosome. Functionally, protein adapter that acts as an essential executor of PIWIL4-piRNA pathway directed transposon DNA methylation and silencing in the male embryonic germ cells. Recruited to young transposons, which are specifically marked with histone H3 trimethylated at both 'Lys-4' and 'Lys-9' (H3K4me3K9me3), via its association with SPIN1 chromatin reader, and associates with the de novo DNA methylation machinery and repressive chromatin remodeling complexes. Following this, PIWIL4 engages with nascent transposable element transcript to direct piRNA-directed DNA methylation. Not required for piRNA biosynthesis. This is SPOC domain-containing protein 1 from Homo sapiens (Human).